The primary structure comprises 307 residues: Aspartate carbamoyltransferase catalytic subunit (307 aa).

Carbamoyl phosphate-binding residues include Arg54 and Thr55. Lys83 lines the L-aspartate pocket. 3 residues coordinate carbamoyl phosphate: Arg104, His132, and Gln135. Arg165 and Arg228 together coordinate L-aspartate. Carbamoyl phosphate-binding residues include Leu267 and Pro268.

It belongs to the aspartate/ornithine carbamoyltransferase superfamily. ATCase family. Heterododecamer (2C3:3R2) of six catalytic PyrB chains organized as two trimers (C3), and six regulatory PyrI chains organized as three dimers (R2).

It catalyses the reaction carbamoyl phosphate + L-aspartate = N-carbamoyl-L-aspartate + phosphate + H(+). It participates in pyrimidine metabolism; UMP biosynthesis via de novo pathway; (S)-dihydroorotate from bicarbonate: step 2/3. Functionally, catalyzes the condensation of carbamoyl phosphate and aspartate to form carbamoyl aspartate and inorganic phosphate, the committed step in the de novo pyrimidine nucleotide biosynthesis pathway. In Clostridium botulinum (strain ATCC 19397 / Type A), this protein is Aspartate carbamoyltransferase catalytic subunit.